A 378-amino-acid chain; its full sequence is Septin-5 (378 aa).

One can recognise a Septin-type G domain in the interval lysine 50–glutamine 323. The G1 motif stretch occupies residues glycine 60–serine 67. GTP is bound by residues glycine 60–serine 67, threonine 94, and glycine 120. Residues aspartate 117–glycine 120 form a G3 motif region. Arginine 177 carries the omega-N-methylarginine modification. The segment at alanine 198–aspartate 201 is G4 motif. GTP is bound at residue lysine 199–glutamate 207. Serine 234 carries the phosphoserine modification. Positions 257 and 272 each coordinate GTP. Serine 336 is modified (phosphoserine). Threonine 345 is modified (phosphothreonine). The stretch at aspartate 347–glutamine 378 forms a coiled coil.

It belongs to the TRAFAC class TrmE-Era-EngA-EngB-Septin-like GTPase superfamily. Septin GTPase family. As to quaternary structure, septins polymerize into heterooligomeric protein complexes that form filaments, and can associate with cellular membranes, actin filaments and microtubules. GTPase activity is required for filament formation. Interacts with SEPTIN2 and SEPTIN5. In platelets, associated with a complex containing STX4. Interacts with PRKN; this interaction leads to SEPTIN5 ubiquitination and degradation. Interacts with DYRK1A. Interacts with STX1A; in the cerebellar cortex. In terms of processing, phosphorylated by DYRK1A.

The protein resides in the cytoplasm. It is found in the cytoskeleton. Filament-forming cytoskeletal GTPase. May play a role in cytokinesis (Potential). May play a role in platelet secretion. This Macaca fascicularis (Crab-eating macaque) protein is Septin-5.